A 158-amino-acid chain; its full sequence is Small ribosomal subunit protein uS7 (158 aa).

This sequence belongs to the universal ribosomal protein uS7 family. In terms of assembly, part of the 30S ribosomal subunit. Contacts proteins S9 and S11.

In terms of biological role, one of the primary rRNA binding proteins, it binds directly to 16S rRNA where it nucleates assembly of the head domain of the 30S subunit. Is located at the subunit interface close to the decoding center, probably blocks exit of the E-site tRNA. This is Small ribosomal subunit protein uS7 from Porphyromonas gingivalis (strain ATCC BAA-308 / W83).